The primary structure comprises 411 residues: Glucose-1-phosphate adenylyltransferase (411 aa).

Residues Gly162, 177-178 (EK), and Ser195 contribute to the alpha-D-glucose 1-phosphate site.

The protein belongs to the bacterial/plant glucose-1-phosphate adenylyltransferase family. Homotetramer.

It carries out the reaction alpha-D-glucose 1-phosphate + ATP + H(+) = ADP-alpha-D-glucose + diphosphate. Its pathway is glycan biosynthesis; glycogen biosynthesis. Its function is as follows. Involved in the biosynthesis of ADP-glucose, a building block required for the elongation reactions to produce glycogen. Catalyzes the reaction between ATP and alpha-D-glucose 1-phosphate (G1P) to produce pyrophosphate and ADP-Glc. This is Glucose-1-phosphate adenylyltransferase from Thermodesulfovibrio yellowstonii (strain ATCC 51303 / DSM 11347 / YP87).